A 948-amino-acid chain; its full sequence is Hexagonally packed intermediate-layer surface protein (948 aa).

The signal sequence occupies residues 1 to 17 (MKKNIALMALTGILTLA). Disulfide bonds link Cys168–Cys187 and Cys554–Cys666.

Post-translationally, glycosylated. Contains tightly bound reducing sugars (six per polypeptide chain) and fatty acids (covalently bound and located in the N-terminal region).

It localises to the secreted. The protein resides in the cell wall. The protein localises to the S-layer. In terms of biological role, shape maintenance, possible protection from noxious enzymes or exogenous and unsettling DNA, and may mediate homotypic cell-cell contacts. In Deinococcus radiodurans (strain ATCC 13939 / DSM 20539 / JCM 16871 / CCUG 27074 / LMG 4051 / NBRC 15346 / NCIMB 9279 / VKM B-1422 / R1), this protein is Hexagonally packed intermediate-layer surface protein (hpi).